A 225-amino-acid polypeptide reads, in one-letter code: Receptor-transporting protein 2 (225 aa).

Residues 1–196 (MCTSLTTCEW…RAQAGSGYNF (196 aa)) are Cytoplasmic-facing. Residues 52-161 (ASGRFHCSWC…AEFCEACQEG (110 aa)) form a 3CxxC-type zinc finger. Residues 197 to 219 (LSLRWCLFWASLCLLVVYLQFSF) traverse the membrane as a helical segment. The Extracellular segment spans residues 220–225 (LSPAFF).

This sequence belongs to the TMEM7 family. In terms of assembly, interacts with olfactory receptors. As to expression, expressed in circumvallate papillae and testis.

It is found in the cell membrane. Functionally, specifically promotes functional cell surface expression of olfactory receptors, but not of other GPCRs. This Homo sapiens (Human) protein is Receptor-transporting protein 2 (RTP2).